We begin with the raw amino-acid sequence, 210 residues long: Ribosomal RNA large subunit methyltransferase E (210 aa).

Gly-64, Trp-66, Asp-84, Asn-100, and Asp-125 together coordinate S-adenosyl-L-methionine. Lys-165 serves as the catalytic Proton acceptor.

This sequence belongs to the class I-like SAM-binding methyltransferase superfamily. RNA methyltransferase RlmE family.

Its subcellular location is the cytoplasm. It carries out the reaction uridine(2552) in 23S rRNA + S-adenosyl-L-methionine = 2'-O-methyluridine(2552) in 23S rRNA + S-adenosyl-L-homocysteine + H(+). Specifically methylates the uridine in position 2552 of 23S rRNA at the 2'-O position of the ribose in the fully assembled 50S ribosomal subunit. The chain is Ribosomal RNA large subunit methyltransferase E from Buchnera aphidicola subsp. Baizongia pistaciae (strain Bp).